We begin with the raw amino-acid sequence, 267 residues long: L-aspartate dehydrogenase 2 (267 aa).

Positions 123 and 189 each coordinate NAD(+). Residue His219 is part of the active site.

Belongs to the L-aspartate dehydrogenase family.

The catalysed reaction is L-aspartate + NADP(+) + H2O = oxaloacetate + NH4(+) + NADPH + H(+). The enzyme catalyses L-aspartate + NAD(+) + H2O = oxaloacetate + NH4(+) + NADH + H(+). The protein operates within cofactor biosynthesis; NAD(+) biosynthesis; iminoaspartate from L-aspartate (dehydrogenase route): step 1/1. Its function is as follows. Specifically catalyzes the NAD or NADP-dependent dehydrogenation of L-aspartate to iminoaspartate. This Bordetella pertussis (strain Tohama I / ATCC BAA-589 / NCTC 13251) protein is L-aspartate dehydrogenase 2.